Here is a 415-residue protein sequence, read N- to C-terminus: Transcriptional regulator fogI (415 aa).

Residues 12-39 constitute a DNA-binding region (zn(2)-C6 fungal-type); that stretch reads CNACNESKVRCSQTKPTCARCERNKTTC. Positions 50–153 are disordered; that stretch reads DAPPISLSHS…ILSPANLDLP (104 aa). Low complexity-rich tracts occupy residues 80 to 102 and 123 to 135; these read VHIP…STTT and QFFA…HQQP.

It localises to the nucleus. Its function is as follows. Transcriptional regulator that postively regulates the expression of the gene cluster that mediates the biosynthesis of flavoglaucin and congeners (including aspergin, dihydroauroglaucin and auroglaucin), prenylated salicylaldehyde derivatives carrying a saturated or an unsaturated C-7 side chain. This Aspergillus ruber (strain CBS 135680) protein is Transcriptional regulator fogI.